The primary structure comprises 678 residues: MEQIEQHILRLRKQLRHWEYLYYVEAAPEVPDSEYDRFMAELRTLEAERPDLLTADSPSQRVGGQAQSSFGQVRHEVPMLSLDNVFEEPGFLAFDKRVRDRLKRDDDMTYCCELKLDGLAVSLLYENGELVRAATRGDGATGEDITANVRTIRTIPLRLQDHDNLPRLLEIRGEVFMSEAGFLRLNETAKREGSKVFANPRNAAAGSLRQLDPSITARRPLTFYCYGVGLLEDGELPESHWERLQQFKAWGVPVSDRVRRCTGSAAVLDFYRQVHEARLSLGFDIDGVVIKVDSLALQQRLGFVARAPRWAIAYKFPAQEQLTRVRDVEFQVGRTGAITPVARLEPVLVSGAMVSNATLHNADEVERLGLMIGDTVIVRRAGDVIPQIVGVVTSERPAEVRPVAFPTQCPVCSSDVERVEGEAVLRCTAGLVCAAQRKEALKHFVSRRAMDIDGMGDKIIDQLVERELVKTPADLFRLNKEILTRLDRMGSKSAQNLLEALEKARQTTFARFLYALGIREVGEATAVNLAAAYGTLDALIAADIDSLTGVQDIGNIVATHVRHFFEETHNIEVIQDLLSPAIGIRWPEPVAAPVAASDNPFAGKTIVLTGSLSSLSRDEAKDHLVALGARVSGSVSAKTDLLIAGEAAGSKLSKAQQLNIPVMDEAEMMRLLGESSDA.

NAD(+)-binding positions include 32 to 36, 81 to 82, and Glu113; these read DSEYD and SL. Lys115 serves as the catalytic N6-AMP-lysine intermediate. NAD(+) contacts are provided by Arg136, Glu174, Lys291, and Lys315. Zn(2+) is bound by residues Cys409, Cys412, Cys427, and Cys433. The 83-residue stretch at 596–678 folds into the BRCT domain; sequence ASDNPFAGKT…MRLLGESSDA (83 aa).

The protein belongs to the NAD-dependent DNA ligase family. LigA subfamily. Mg(2+) is required as a cofactor. The cofactor is Mn(2+).

It catalyses the reaction NAD(+) + (deoxyribonucleotide)n-3'-hydroxyl + 5'-phospho-(deoxyribonucleotide)m = (deoxyribonucleotide)n+m + AMP + beta-nicotinamide D-nucleotide.. Functionally, DNA ligase that catalyzes the formation of phosphodiester linkages between 5'-phosphoryl and 3'-hydroxyl groups in double-stranded DNA using NAD as a coenzyme and as the energy source for the reaction. It is essential for DNA replication and repair of damaged DNA. This Sodalis glossinidius (strain morsitans) protein is DNA ligase.